The chain runs to 179 residues: Large ribosomal subunit protein uL5 (179 aa).

It belongs to the universal ribosomal protein uL5 family. Part of the 50S ribosomal subunit; part of the 5S rRNA/L5/L18/L25 subcomplex. Contacts the 5S rRNA and the P site tRNA. Forms a bridge to the 30S subunit in the 70S ribosome.

In terms of biological role, this is one of the proteins that bind and probably mediate the attachment of the 5S RNA into the large ribosomal subunit, where it forms part of the central protuberance. In the 70S ribosome it contacts protein S13 of the 30S subunit (bridge B1b), connecting the 2 subunits; this bridge is implicated in subunit movement. Contacts the P site tRNA; the 5S rRNA and some of its associated proteins might help stabilize positioning of ribosome-bound tRNAs. This Microcystis aeruginosa (strain NIES-843 / IAM M-2473) protein is Large ribosomal subunit protein uL5.